A 337-amino-acid polypeptide reads, in one-letter code: PHD finger protein 11 (337 aa).

The C2HC pre-PHD-type zinc-finger motif lies at 25-61 (KRTCALCPEGHEWSQIYFSPSGNIVAHENCLLYSSGL). Residues 91 to 143 (LKCSFCNKGGATVGCDLWFCKKSYHYVCAKKDQAILQVDGNHGTYKLFCPEHS) form a PHD-type zinc finger. Disordered stretches follow at residues 145–196 (EQEE…HGHT) and 301–337 (GDLD…GDSL). Residues 187–196 (HMTEEPHGHT) are compositionally biased toward basic and acidic residues. Composition is skewed to polar residues over residues 301–312 (GDLDCSSSTSGS) and 323–337 (SQES…GDSL).

Interacts with BRCA1 and RELA.

The protein localises to the nucleus. Functionally, positive regulator of Th1-type cytokine gene expression. This is PHD finger protein 11 (Phf11) from Mus musculus (Mouse).